A 1070-amino-acid polypeptide reads, in one-letter code: Granule associated Rac and RHOG effector protein 1 (1070 aa).

Disordered stretches follow at residues 681 to 771 (EQKA…VGAG), 855 to 992 (SQAM…STLP), and 1032 to 1070 (SYVQ…LPQY). Positions 692 to 702 (PSLPVPPPPRA) are enriched in pro residues. 3 stretches are compositionally biased toward low complexity: residues 719-742 (PQQQ…QPIG), 906-924 (AQGD…NGDS), and 951-962 (TSTLPSPPLLTT). Residue S723 is modified to Phosphoserine. Pro residues predominate over residues 977–992 (PKAPWQHPSPLPSTLP). Residues 1046–1058 (HKAAPKGFKAFPG) show a composition bias toward low complexity.

Interacts with AGO2 and TNRC6A.

The protein localises to the cytoplasm. Its subcellular location is the P-body. Acts as an effector of RAC1. Associates with CCR4-NOT complex which is one of the major cellular mRNA deadenylases and is linked to various cellular processes including bulk mRNA degradation, miRNA-mediated repression, translational repression during translational initiation and general transcription regulation. May also play a role in miRNA silencing machinery. The sequence is that of Granule associated Rac and RHOG effector protein 1 from Homo sapiens (Human).